The chain runs to 92 residues: Large ribosomal subunit protein bL28 (92 aa).

The protein belongs to the bacterial ribosomal protein bL28 family.

This Borreliella burgdorferi (strain ATCC 35210 / DSM 4680 / CIP 102532 / B31) (Borrelia burgdorferi) protein is Large ribosomal subunit protein bL28.